The following is an 86-amino-acid chain: MELKHSISDYTEAEFLEFVKKICRAEGATEEDDNKLVREFERLTEHPDGSDLIYYPRDDREDSPEGIVKEIKEWRAANGKSGFKQG.

It belongs to the colicins ColE2/ColE8/ColE9 and pyocins S1/S2 family.

Its function is as follows. This protein is able to protect a cell, which harbors the plasmid ColE2 encoding colicin E2, against colicin E2. The polypeptide is Colicin-E2 immunity protein (imm) (Escherichia coli).